We begin with the raw amino-acid sequence, 90 residues long: Large ribosomal subunit protein bL31 (90 aa).

The segment at 65–90 is disordered; sequence YSKQEGSGSKSNKSKSTKSKKGKGKK. Residues 76 to 90 show a composition bias toward basic residues; it reads NKSKSTKSKKGKGKK.

Belongs to the bacterial ribosomal protein bL31 family. Type A subfamily. Part of the 50S ribosomal subunit.

Binds the 23S rRNA. This is Large ribosomal subunit protein bL31 from Trichodesmium erythraeum (strain IMS101).